Consider the following 484-residue polypeptide: CUGBP Elav-like family member 2 (484 aa).

Necessary for nuclear export regions lie at residues 1 to 89 and 90 to 178; these read MNGA…PGMH and HPIQ…EGCS. RRM domains follow at residues 16 to 99, 108 to 188, and 399 to 477; these read IKTF…PADS, RKLF…FADT, and ANLF…LKRS. A necessary for splicing activity region spans residues 188–240; that stretch reads TQKDKEQRRLQQQLAQQMQQLNTATWGNLTGLGGLTPQYLALLQQATSSSNLG. Positions 347–399 are necessary for nuclear localization; that stretch reads GLTNGTAGTMDALTQAYSGIQQYAAAALPTLYSQSLLQQQSAAGSQKEGPEGA. A necessary for nuclear localization and splicing activity region spans residues 426-484; the sequence is ISAKVFIDKQTNLSKCFGFVSYDNPVSAQAAIQAMNGFQIGMKRLKVQLKRSKNDSKPY.

The protein belongs to the CELF/BRUNOL family. In terms of tissue distribution, expressed in heart.

Its subcellular location is the nucleus. It is found in the cytoplasm. Its function is as follows. RNA-binding protein implicated in the regulation of several post-transcriptional events. May be involved in mRNA translation repression and stability. Mediates exon inclusion in TNNT2 pre-mRNA. This Gallus gallus (Chicken) protein is CUGBP Elav-like family member 2 (CELF2).